A 266-amino-acid chain; its full sequence is MYVETQEEEPEIKIPLPRVGITNLRTIAKINWKGRIYTFIPTFEVTIDLPREKKGIHMSRLVESITDAMSEAVEEEVKKIHTSLEELALAVIKRLEEKHKHKRAEVWIRTTLILEKTTPASRKLSYEPYDVEVAVIKEGKDVKKRLKVRVIGNTACPHAMANNNGKTHIQRAIGELEVMADFNEEIALEDMIEVVESSFSSPTYTLLKTPDENAVVRKMYENPKFVEDVAREILMKAREKFPGRIHVRVISNESIHKHDVIAEAWA.

Belongs to the GTP cyclohydrolase IV family. Homodimer. It depends on Fe(2+) as a cofactor.

It carries out the reaction GTP + H2O = 7,8-dihydroneopterin 2',3'-cyclic phosphate + formate + diphosphate + H(+). The protein operates within cofactor biosynthesis; 5,6,7,8-tetrahydromethanopterin biosynthesis. Functionally, converts GTP to 7,8-dihydro-D-neopterin 2',3'-cyclic phosphate, the first intermediate in the biosynthesis of coenzyme methanopterin. The chain is GTP cyclohydrolase MptA from Pyrococcus abyssi (strain GE5 / Orsay).